A 775-amino-acid polypeptide reads, in one-letter code: Dipeptidyl peptidase 4 (775 aa).

The signal sequence occupies residues 1 to 15; the sequence is MKFLSLLLLVGVAQA. Asparagine 81, asparagine 111, and asparagine 219 each carry an N-linked (GlcNAc...) asparagine glycan. Catalysis depends on charge relay system residues serine 613, aspartate 690, and histidine 725. An N-linked (GlcNAc...) asparagine glycan is attached at asparagine 731.

It belongs to the peptidase S9B family.

It localises to the secreted. It catalyses the reaction Release of an N-terminal dipeptide, Xaa-Yaa-|-Zaa-, from a polypeptide, preferentially when Yaa is Pro, provided Zaa is neither Pro nor hydroxyproline.. Extracellular dipeptidyl-peptidase which removes N-terminal dipeptides sequentially from polypeptides having unsubstituted N-termini provided that the penultimate residue is proline. Contributes to pathogenicity. The protein is Dipeptidyl peptidase 4 (DPP4) of Arthroderma otae (strain ATCC MYA-4605 / CBS 113480) (Microsporum canis).